Here is a 65-residue protein sequence, read N- to C-terminus: Large ribosomal subunit protein bL35 (65 aa).

This sequence belongs to the bacterial ribosomal protein bL35 family.

The chain is Large ribosomal subunit protein bL35 from Polynucleobacter asymbioticus (strain DSM 18221 / CIP 109841 / QLW-P1DMWA-1) (Polynucleobacter necessarius subsp. asymbioticus).